Here is a 361-residue protein sequence, read N- to C-terminus: Beta-hexosaminidase (361 aa).

Residues Asp-69, Arg-77, Arg-144, and 174–175 contribute to the substrate site; that span reads KH. His-187 serves as the catalytic Proton donor/acceptor. Asp-258 functions as the Nucleophile in the catalytic mechanism.

Belongs to the glycosyl hydrolase 3 family. NagZ subfamily.

The protein localises to the cytoplasm. It carries out the reaction Hydrolysis of terminal non-reducing N-acetyl-D-hexosamine residues in N-acetyl-beta-D-hexosaminides.. It participates in cell wall biogenesis; peptidoglycan recycling. Functionally, plays a role in peptidoglycan recycling by cleaving the terminal beta-1,4-linked N-acetylglucosamine (GlcNAc) from peptide-linked peptidoglycan fragments, giving rise to free GlcNAc, anhydro-N-acetylmuramic acid and anhydro-N-acetylmuramic acid-linked peptides. This chain is Beta-hexosaminidase, found in Neisseria meningitidis serogroup A / serotype 4A (strain DSM 15465 / Z2491).